The primary structure comprises 1210 residues: Disease resistance-like protein DSC2 (1210 aa).

Positions 59–223 constitute a TIR domain; sequence WTHQVFPSFR…KVAKDVSDVL (165 aa). Residue glutamate 134 is part of the active site. An NB-ARC domain is found at 241–511; that stretch reads ITRINSLLCL…CLFNGCQVNH (271 aa). LRR repeat units follow at residues 662 to 685, 686 to 709, 711 to 732, 756 to 780, 783 to 804, 805 to 828, 830 to 848, 849 to 873, and 940 to 970; these read AKFL…IQPL, KNLK…SNAT, LESL…IRGT, ATSL…LPGD, MRSL…PEIS, TNIQ…RLWS, LDKL…PPVP, DGIS…NLSQ, and LPEL…NLSQ.

This sequence belongs to the disease resistance NB-LRR family. As to quaternary structure, interacts with DSC1.

The enzyme catalyses NAD(+) + H2O = ADP-D-ribose + nicotinamide + H(+). In terms of biological role, TIR-NB-LRR receptor-like protein involved in plant defense. Acts as a trigger of hypersensitive response (HR). Functions as a guard of CAMTA3, a negative regulator of immunity, during pathogen infection. In Arabidopsis thaliana (Mouse-ear cress), this protein is Disease resistance-like protein DSC2.